Reading from the N-terminus, the 257-residue chain is Hydroxyacylglutathione hydrolase (257 aa).

Zn(2+) is bound by residues histidine 54, histidine 56, aspartate 58, histidine 59, histidine 113, aspartate 137, and histidine 175.

The protein belongs to the metallo-beta-lactamase superfamily. Glyoxalase II family. In terms of assembly, monomer. Requires Zn(2+) as cofactor.

It catalyses the reaction an S-(2-hydroxyacyl)glutathione + H2O = a 2-hydroxy carboxylate + glutathione + H(+). The protein operates within secondary metabolite metabolism; methylglyoxal degradation; (R)-lactate from methylglyoxal: step 2/2. Thiolesterase that catalyzes the hydrolysis of S-D-lactoyl-glutathione to form glutathione and D-lactic acid. The chain is Hydroxyacylglutathione hydrolase from Crocosphaera subtropica (strain ATCC 51142 / BH68) (Cyanothece sp. (strain ATCC 51142)).